A 372-amino-acid chain; its full sequence is DNA primase small subunit PriS (372 aa).

Active-site residues include Asp-95, Asp-97, and Asp-280.

Belongs to the eukaryotic-type primase small subunit family. As to quaternary structure, heterodimer of a small subunit (PriS) and a large subunit (PriL). The cofactor is Mg(2+). Requires Mn(2+) as cofactor.

Its function is as follows. Catalytic subunit of DNA primase, an RNA polymerase that catalyzes the synthesis of short RNA molecules used as primers for DNA polymerase during DNA replication. The small subunit contains the primase catalytic core and has DNA synthesis activity on its own. Binding to the large subunit stabilizes and modulates the activity, increasing the rate of DNA synthesis while decreasing the length of the DNA fragments, and conferring RNA synthesis capability. The DNA polymerase activity may enable DNA primase to also catalyze primer extension after primer synthesis. May also play a role in DNA repair. This is DNA primase small subunit PriS from Cenarchaeum symbiosum (strain A).